Consider the following 118-residue polypeptide: Small ribosomal subunit protein uS13 (118 aa).

Positions R92 to K118 are disordered.

This sequence belongs to the universal ribosomal protein uS13 family. Part of the 30S ribosomal subunit. Forms a loose heterodimer with protein S19. Forms two bridges to the 50S subunit in the 70S ribosome.

Its function is as follows. Located at the top of the head of the 30S subunit, it contacts several helices of the 16S rRNA. In the 70S ribosome it contacts the 23S rRNA (bridge B1a) and protein L5 of the 50S subunit (bridge B1b), connecting the 2 subunits; these bridges are implicated in subunit movement. Contacts the tRNAs in the A and P-sites. The chain is Small ribosomal subunit protein uS13 from Yersinia pestis.